The following is a 179-amino-acid chain: Large ribosomal subunit protein uL6 (179 aa).

It belongs to the universal ribosomal protein uL6 family. As to quaternary structure, part of the 50S ribosomal subunit.

In terms of biological role, this protein binds to the 23S rRNA, and is important in its secondary structure. It is located near the subunit interface in the base of the L7/L12 stalk, and near the tRNA binding site of the peptidyltransferase center. In Leptospira biflexa serovar Patoc (strain Patoc 1 / ATCC 23582 / Paris), this protein is Large ribosomal subunit protein uL6.